We begin with the raw amino-acid sequence, 158 residues long: Transcription elongation factor GreA (158 aa).

The stretch at Gln4 to Ala75 forms a coiled coil.

This sequence belongs to the GreA/GreB family.

In terms of biological role, necessary for efficient RNA polymerase transcription elongation past template-encoded arresting sites. The arresting sites in DNA have the property of trapping a certain fraction of elongating RNA polymerases that pass through, resulting in locked ternary complexes. Cleavage of the nascent transcript by cleavage factors such as GreA or GreB allows the resumption of elongation from the new 3'terminus. GreA releases sequences of 2 to 3 nucleotides. The sequence is that of Transcription elongation factor GreA from Staphylococcus saprophyticus subsp. saprophyticus (strain ATCC 15305 / DSM 20229 / NCIMB 8711 / NCTC 7292 / S-41).